A 573-amino-acid chain; its full sequence is Protein FAM227B (573 aa).

Residues 429 to 485 (DNKKDFKRVKQRIKDDIKFLKEQQEQIDKELDRLQAKASKNLQEVKNDFENFLHKLR) are a coiled coil. The segment covering 497–521 (SASPSESLQSLQSPNSSLSSPAMSE) has biased composition (low complexity). Residues 497–528 (SASPSESLQSLQSPNSSLSSPAMSEDFNSVEE) are disordered.

The protein belongs to the FAM227 family.

The polypeptide is Protein FAM227B (Fam227b) (Rattus norvegicus (Rat)).